Consider the following 121-residue polypeptide: Basic phospholipase A2 homolog piratoxin-1 (121 aa).

7 cysteine pairs are disulfide-bonded: cysteine 26-cysteine 115, cysteine 28-cysteine 44, cysteine 43-cysteine 95, cysteine 49-cysteine 121, cysteine 50-cysteine 88, cysteine 57-cysteine 81, and cysteine 75-cysteine 86. An important for membrane-damaging activities in eukaryotes and bacteria; heparin-binding region spans residues lysine 105–lysine 117.

Belongs to the phospholipase A2 family. Group II subfamily. K49 sub-subfamily. Homodimer; non-covalently linked. In terms of tissue distribution, expressed by the venom gland.

It is found in the secreted. Its activity is regulated as follows. Rosmarinic acid inhibits the myotoxic activity. Bromophenacyl bromide (BPB) inhibits the myotoxic activity through a covalent binding. Caffeic acid and aristolochic acid, two plant compounds used in folk medicine used to treat envenomation, inhibit the myotoxic activity. Functionally, snake venom phospholipase A2 (PLA2) homolog that lacks enzymatic activity. Is myotoxic and displays edema-inducing activities. Induces neuromuscular blockage. A model of myotoxic mechanism has been proposed: an apo Lys49-PLA2 is activated by the entrance of a hydrophobic molecule (e.g. fatty acid) at the hydrophobic channel of the protein leading to a reorientation of a monomer. This reorientation causes a transition between 'inactive' to 'active' states, causing alignment of C-terminal and membrane-docking sites (MDoS) side-by-side and putting the membrane-disruption sites (MDiS) in the same plane, exposed to solvent and in a symmetric position for both monomers. The MDoS region stabilizes the toxin on membrane by the interaction of charged residues with phospholipid head groups. Subsequently, the MDiS region destabilizes the membrane with penetration of hydrophobic residues. This insertion causes a disorganization of the membrane, allowing an uncontrolled influx of ions (i.e. calcium and sodium), and eventually triggering irreversible intracellular alterations and cell death. This chain is Basic phospholipase A2 homolog piratoxin-1, found in Bothrops pirajai (Piraja's lancehead).